Consider the following 476-residue polypeptide: Probable pectin lyase F (476 aa).

The first 20 residues, 1–20, serve as a signal peptide directing secretion; it reads MTLLRHLLTATALLGASVQA. Cysteines 84 and 108 form a disulfide. Asn103 and Asn131 each carry an N-linked (GlcNAc...) asparagine glycan. The active site involves Arg258. 2 N-linked (GlcNAc...) asparagine glycosylation sites follow: Asn277 and Asn318. Residues Cys325 and Cys333 are joined by a disulfide bond. Asn385 carries an N-linked (GlcNAc...) asparagine glycan. The disordered stretch occupies residues 412 to 476; that stretch reads FVPAYSEAGP…HHHQGHGRGY (65 aa). The span at 426 to 453 shows a compositional bias: polar residues; the sequence is VPTQPSWSWRTVTNGPAPTGAPSDSPSA. A compositionally biased stretch (basic residues) spans 465-476; it reads NKHHHQGHGRGY.

This sequence belongs to the polysaccharide lyase 1 family.

The protein resides in the secreted. It catalyses the reaction Eliminative cleavage of (1-&gt;4)-alpha-D-galacturonan methyl ester to give oligosaccharides with 4-deoxy-6-O-methyl-alpha-D-galact-4-enuronosyl groups at their non-reducing ends.. Its function is as follows. Pectinolytic enzymes consist of four classes of enzymes: pectin lyase, polygalacturonase, pectin methylesterase and rhamnogalacturonase. Among pectinolytic enzymes, pectin lyase is the most important in depolymerization of pectin, since it cleaves internal glycosidic bonds of highly methylated pectins. The polypeptide is Probable pectin lyase F (pelF) (Aspergillus niger (strain ATCC MYA-4892 / CBS 513.88 / FGSC A1513)).